Here is a 115-residue protein sequence, read N- to C-terminus: Toxin-like structure LSTX-D1 (115 aa).

The signal sequence occupies residues 1 to 22; the sequence is MKVLVLFSVLFLTLFSYSSTEA. Positions 23–44 are excised as a propeptide; that stretch reads IDEFDSDAEEDMLSLMANEQVR. 4 disulfide bridges follow: Cys-48/Cys-63, Cys-55/Cys-72, Cys-62/Cys-87, and Cys-74/Cys-85.

This sequence belongs to the neurotoxin 19 (CSTX) family. 01 subfamily. In terms of tissue distribution, expressed by the venom gland.

The protein resides in the secreted. This is Toxin-like structure LSTX-D1 from Lycosa singoriensis (Wolf spider).